Here is a 260-residue protein sequence, read N- to C-terminus: UPF0246 protein APJL_0596 (260 aa).

Belongs to the UPF0246 family.

The chain is UPF0246 protein APJL_0596 from Actinobacillus pleuropneumoniae serotype 3 (strain JL03).